A 266-amino-acid polypeptide reads, in one-letter code: Thymidylate synthase (266 aa).

Arg-24 contacts dUMP. A (6R)-5,10-methylene-5,6,7,8-tetrahydrofolate-binding site is contributed by His-54. 129-130 is a dUMP binding site; sequence RR. The active-site Nucleophile is Cys-149. Residues 169–172, Asn-180, and 210–212 contribute to the dUMP site; these read RSAD and HIY. A (6R)-5,10-methylene-5,6,7,8-tetrahydrofolate-binding site is contributed by Asp-172. Ala-265 contacts (6R)-5,10-methylene-5,6,7,8-tetrahydrofolate.

Belongs to the thymidylate synthase family. Bacterial-type ThyA subfamily. Homodimer.

The protein localises to the cytoplasm. It carries out the reaction dUMP + (6R)-5,10-methylene-5,6,7,8-tetrahydrofolate = 7,8-dihydrofolate + dTMP. It functions in the pathway pyrimidine metabolism; dTTP biosynthesis. In terms of biological role, catalyzes the reductive methylation of 2'-deoxyuridine-5'-monophosphate (dUMP) to 2'-deoxythymidine-5'-monophosphate (dTMP) while utilizing 5,10-methylenetetrahydrofolate (mTHF) as the methyl donor and reductant in the reaction, yielding dihydrofolate (DHF) as a by-product. This enzymatic reaction provides an intracellular de novo source of dTMP, an essential precursor for DNA biosynthesis. In Mycobacterium leprae (strain TN), this protein is Thymidylate synthase.